A 90-amino-acid chain; its full sequence is Putative membrane protein insertion efficiency factor (90 aa).

Belongs to the UPF0161 family.

It is found in the cell membrane. Could be involved in insertion of integral membrane proteins into the membrane. In Lactococcus lactis subsp. cremoris (strain MG1363), this protein is Putative membrane protein insertion efficiency factor.